Here is a 992-residue protein sequence, read N- to C-terminus: MVTRTRPVAAMAVRSRSSSRTGTAYLLLVLCEVSWAQIFSFPFRRPETCDFNQYFDISALSCAPCGANQRRDALGTSCVCLPGYHMISNNGGPSIICKKCPENMKGVTKDGWDCISCPSGLTAEGKCHCPTGHILVERNVSGSLLAQATCELCDESENSFTKANALGTRCVRCEPTFVNTSRSCSCSEPHTLTGGLCFSNTGNFHQRVISTARYGELGMSLNSEWFAKYLQATAAACWTHANLTSCQALGNMCVMNMNSYDSTTLDACRLFHYIFESTAGLISVHSVPFWRQNLPWLFYGDQPGLAPQVLSTTPLPTNFSFKGQNQLKFVAASYDIRGNFIKWQPLEGGVLQLCPDTERRLDAAYAFGTTYQQNCEISLSKLLVDFSSPVFYDVYLEYTDEEQHRYLWPIPVLNLNLQHNKLFVNQDSSSSKWLLTRRIFLVDAVSGRENDLGNQPRVIRVATQISLSIRLVPNTKNGNIYTPLLTIAYSDIDIKNAHSQSAKISFSVKYEMNQGDASVHTDIALGVLGGLAVLSSLLKTAGWKRRVGSPMIDLQTVMKFLLYYAGDLANVFFIITVGTGLYWLIFFKAQKSVSVLLPMPVQEERFVTYVGCAFAMKALQFLHKFISQISIDIFFIDWERPKGKVLKAVEGEGGVRSATVPVSIWRTYFVANEWNEIQTVRKINPLFQVLTTLFFLEVVGFKNLALMDSSSSLSRNPSDYTAPYSRILRYAVATAIWLVIGIIQVVFFAAFYERFIEDKIRQFVDLCSMSNVSVFLLSHRCFGYYIHGRSVHGHADTNMEEMNMNLKREAENLCSQRGLVPNTDGQTFQIAVSSQMRQHYDRIHETLTRRNGPARLLSSSGSTFEQSIKAYHAMNKFLGSFIDHVHKEMDYFIKDKLLLERILGMEFMEPMEKSIFYNDEGHSFSSVLYYGNEATLLIFDLLFFCVVDLACQDFVLASFLTYLQQEIFRFIRNTVGQKNLATKTLVDERFLI.

A signal peptide spans 1–36; it reads MVTRTRPVAAMAVRSRSSSRTGTAYLLLVLCEVSWA. A cysteine-rich region spans residues 37-280; that stretch reads QIFSFPFRRP…FHYIFESTAG (244 aa). The Extracellular portion of the chain corresponds to 37–516; the sequence is QIFSFPFRRP…SVKYEMNQGD (480 aa). 12 cysteine pairs are disulfide-bonded: cysteine 49–cysteine 62, cysteine 65–cysteine 78, cysteine 80–cysteine 97, cysteine 100–cysteine 114, cysteine 117–cysteine 127, cysteine 129–cysteine 150, cysteine 153–cysteine 170, cysteine 173–cysteine 184, cysteine 186–cysteine 197, cysteine 237–cysteine 246, cysteine 253–cysteine 268, and cysteine 354–cysteine 375. The N-linked (GlcNAc...) asparagine glycan is linked to asparagine 242. The chain crosses the membrane as a helical span at residues 517 to 545; it reads ASVHTDIALGVLGGLAVLSSLLKTAGWKR. Over 546-555 the chain is Cytoplasmic; sequence RVGSPMIDLQ. The chain crosses the membrane as a helical span at residues 556–587; sequence TVMKFLLYYAGDLANVFFIITVGTGLYWLIFF. Over 588 to 600 the chain is Extracellular; that stretch reads KAQKSVSVLLPMP. Residues 601 to 628 traverse the membrane as a helical segment; sequence VQEERFVTYVGCAFAMKALQFLHKFISQ. Topologically, residues 629 to 667 are cytoplasmic; it reads ISIDIFFIDWERPKGKVLKAVEGEGGVRSATVPVSIWRT. Positions 668–676 form an intramembrane region, helical; it reads YFVANEWNE. The chain crosses the membrane as a discontinuously helical span at residues 668–698; the sequence is YFVANEWNEIQTVRKINPLFQVLTTLFFLEV. The stretch at 677 to 685 is an intramembrane region; sequence IQTVRKINP. The helical intramembrane region spans 686-698; that stretch reads LFQVLTTLFFLEV. The Extracellular segment spans residues 699–728; it reads VGFKNLALMDSSSSLSRNPSDYTAPYSRIL. The helical intramembrane region spans 729 to 754; that stretch reads RYAVATAIWLVIGIIQVVFFAAFYER. The discontinuously helical transmembrane segment at 729–768 threads the bilayer; sequence RYAVATAIWLVIGIIQVVFFAAFYERFIEDKIRQFVDLCS. An intramembrane segment occupies 755 to 759; it reads FIEDK. Residues 760 to 768 constitute an intramembrane region (helical); that stretch reads IRQFVDLCS. Topologically, residues 769–923 are cytoplasmic; that stretch reads MSNVSVFLLS…SIFYNDEGHS (155 aa). The segment at residues 924 to 926 is an intramembrane region (helical); the sequence is FSS. Residues 924 to 949 traverse the membrane as a discontinuously helical segment; sequence FSSVLYYGNEATLLIFDLLFFCVVDL. Residues 927-933 lie within the membrane without spanning it; the sequence is VLYYGNE. The helical intramembrane region spans 934–949; it reads ATLLIFDLLFFCVVDL. Residues 950 to 954 lie on the Extracellular side of the membrane; sequence ACQDF. Residues 955–982 traverse the membrane as a helical segment; sequence VLASFLTYLQQEIFRFIRNTVGQKNLAT. Residues 983–992 are Cytoplasmic-facing; it reads KTLVDERFLI.

In terms of assembly, homodimer. Part of the tectonic-like complex (also named B9 complex). Interacts with DNAJB9, DNAJC10 and mutated SFTPC. Interacts with SYNE2 during the early establishment of cell polarity. Interacts (via C-terminus) with FLNA. Interacts with TMEM218. Interacts with WNT5A. Interacts with ROR2.

It localises to the cell membrane. Its subcellular location is the endoplasmic reticulum membrane. It is found in the cytoplasm. The protein resides in the cytoskeleton. The protein localises to the cilium basal body. Its function is as follows. Part of the tectonic-like complex which is required for tissue-specific ciliogenesis and may regulate ciliary membrane composition. Involved in centrosome migration to the apical cell surface during early ciliogenesis. Required for ciliary structure and function, including a role in regulating length and appropriate number through modulating centrosome duplication. Is a key regulator of stereociliary bundle orientation. Required for epithelial cell branching morphology. Essential for endoplasmic reticulum-associated degradation (ERAD) of surfactant protein C (sftpc). Involved in the negative regulation of canonical Wnt signaling, and activation of the non-canonical cascade stimulated by WNT5A. In non-canonical Wnt signaling, it may act as ROR2 coreceptor. This chain is Meckelin (Tmem67), found in Mus musculus (Mouse).